The sequence spans 273 residues: Large ribosomal subunit protein uL2 (273 aa).

The interval 221–273 is disordered; sequence RGTAMNPVDHPHGGGEGRNFGKHPVSPWGVQTKGKKTRHNKRTDKYIVRRRGK. The span at 253-273 shows a compositional bias: basic residues; the sequence is KGKKTRHNKRTDKYIVRRRGK.

Belongs to the universal ribosomal protein uL2 family. As to quaternary structure, part of the 50S ribosomal subunit. Forms a bridge to the 30S subunit in the 70S ribosome.

Its function is as follows. One of the primary rRNA binding proteins. Required for association of the 30S and 50S subunits to form the 70S ribosome, for tRNA binding and peptide bond formation. It has been suggested to have peptidyltransferase activity; this is somewhat controversial. Makes several contacts with the 16S rRNA in the 70S ribosome. This chain is Large ribosomal subunit protein uL2, found in Mannheimia succiniciproducens (strain KCTC 0769BP / MBEL55E).